Reading from the N-terminus, the 303-residue chain is Uricase (303 aa).

Residue Ala-2 is modified to N-acetylalanine. Lys-10 and Lys-23 each carry N6-acetyllysine; alternate. An N6-succinyllysine; alternate mark is found at Lys-10 and Lys-23. Lys-23 serves as the catalytic Charge relay system. N6-acetyllysine occurs at positions 27 and 36. Phosphoserine occurs at positions 39 and 63. Catalysis depends on Thr-68, which acts as the Charge relay system. Thr-68 and Asp-69 together coordinate urate. 3 positions are modified to N6-acetyllysine: Lys-118, Lys-122, and Lys-164. Phe-170 provides a ligand contact to urate. An N6-acetyllysine mark is found at Lys-175 and Lys-185. Arg-187 is a binding site for urate. N6-acetyllysine; alternate occurs at positions 220 and 227. Lys-220 and Lys-227 each carry N6-succinyllysine; alternate. Ser-231 is subject to Phosphoserine. Urate-binding residues include Val-234, Gln-235, and Asn-261. Catalysis depends on His-263, which acts as the Charge relay system. Lys-277 bears the N6-acetyllysine mark. Tyr-288 is modified (phosphotyrosine). A Microbody targeting signal motif is present at residues 301-303; sequence SRL.

Belongs to the uricase family. Post-translationally, acetylation of Lys-118, Lys-164 and Lys-290 is observed in liver mitochondria from fasted mice but not from fed mice. May be deacetylated by Sirt5; however it is unclear whether Sirt5 mediates deacetylation or desuccinylation of Uox; additional evidence is required to validate these results.

The protein resides in the peroxisome. The protein localises to the mitochondrion. The catalysed reaction is urate + O2 + H2O = 5-hydroxyisourate + H2O2. It functions in the pathway purine metabolism; urate degradation; (S)-allantoin from urate: step 1/3. Functionally, catalyzes the oxidation of uric acid to 5-hydroxyisourate, which is further processed to form (S)-allantoin. This is Uricase (Uox) from Mus musculus (Mouse).